The primary structure comprises 367 residues: Flagellar P-ring protein (367 aa).

Residues 1–21 (MYVFKALAGIVLALVATLAHA) form the signal peptide.

Belongs to the FlgI family. The basal body constitutes a major portion of the flagellar organelle and consists of four rings (L,P,S, and M) mounted on a central rod.

The protein localises to the periplasm. Its subcellular location is the bacterial flagellum basal body. Functionally, assembles around the rod to form the L-ring and probably protects the motor/basal body from shearing forces during rotation. This Salmonella choleraesuis (strain SC-B67) protein is Flagellar P-ring protein.